A 311-amino-acid polypeptide reads, in one-letter code: tRNA-cytidine(32) 2-sulfurtransferase (311 aa).

The PP-loop motif motif lies at 45 to 50 (SGGKDS). Residues C120, C123, and C211 each coordinate [4Fe-4S] cluster.

It belongs to the TtcA family. Homodimer. The cofactor is Mg(2+). [4Fe-4S] cluster is required as a cofactor.

It is found in the cytoplasm. It catalyses the reaction cytidine(32) in tRNA + S-sulfanyl-L-cysteinyl-[cysteine desulfurase] + AH2 + ATP = 2-thiocytidine(32) in tRNA + L-cysteinyl-[cysteine desulfurase] + A + AMP + diphosphate + H(+). It participates in tRNA modification. Catalyzes the ATP-dependent 2-thiolation of cytidine in position 32 of tRNA, to form 2-thiocytidine (s(2)C32). The sulfur atoms are provided by the cysteine/cysteine desulfurase (IscS) system. This Shewanella pealeana (strain ATCC 700345 / ANG-SQ1) protein is tRNA-cytidine(32) 2-sulfurtransferase.